We begin with the raw amino-acid sequence, 363 residues long: Pyrimidine monooxygenase RutA (363 aa).

FMN contacts are provided by residues 49–50, Asn-115, Glu-124, 140–141, and Ser-190; these read IK and RY.

It belongs to the NtaA/SnaA/DszA monooxygenase family. RutA subfamily.

It carries out the reaction uracil + FMNH2 + NADH + O2 = (Z)-3-ureidoacrylate + FMN + NAD(+) + H2O + H(+). The catalysed reaction is thymine + FMNH2 + NADH + O2 = (Z)-2-methylureidoacrylate + FMN + NAD(+) + H2O + H(+). Functionally, catalyzes the pyrimidine ring opening between N-3 and C-4 by an unusual flavin hydroperoxide-catalyzed mechanism, adding oxygen atoms in the process to yield ureidoacrylate peracid, that immediately reacts with FMN forming ureidoacrylate and FMN-N(5)-oxide. The FMN-N(5)-oxide reacts spontaneously with NADH to produce FMN. Requires the flavin reductase RutF to regenerate FMN in vivo. This chain is Pyrimidine monooxygenase RutA, found in Klebsiella pneumoniae (strain 342).